Consider the following 106-residue polypeptide: Large ribosomal subunit protein bL21 (106 aa).

This sequence belongs to the bacterial ribosomal protein bL21 family. Part of the 50S ribosomal subunit. Contacts protein L20.

Functionally, this protein binds to 23S rRNA in the presence of protein L20. The sequence is that of Large ribosomal subunit protein bL21 from Dichelobacter nodosus (strain VCS1703A).